A 64-amino-acid chain; its full sequence is Large ribosomal subunit protein bL35 (64 aa).

This sequence belongs to the bacterial ribosomal protein bL35 family.

This is Large ribosomal subunit protein bL35 from Helicobacter hepaticus (strain ATCC 51449 / 3B1).